We begin with the raw amino-acid sequence, 76 residues long: Repressor protein of division inhibition gene dicB (76 aa).

Residues 13–33 mediate DNA binding; that stretch reads KTKLAQAAGIRLASLYSWKGD.

Functionally, this protein is a repressor of division inhibition gene dicB. The sequence is that of Repressor protein of division inhibition gene dicB (dicC) from Escherichia coli (strain K12).